The chain runs to 268 residues: Phosphonates import ATP-binding protein PhnC (268 aa).

The ABC transporter domain occupies 11-254; that stretch reads LHAEAVTKRF…EVMAIYQRAE (244 aa). Residue 43-50 participates in ATP binding; that stretch reads GLSGSGKS.

Belongs to the ABC transporter superfamily. Phosphonates importer (TC 3.A.1.9.1) family. The complex is composed of two ATP-binding proteins (PhnC), two transmembrane proteins (PhnE) and a solute-binding protein (PhnD).

The protein resides in the cell membrane. It catalyses the reaction phosphonate(out) + ATP + H2O = phosphonate(in) + ADP + phosphate + H(+). Functionally, part of the ABC transporter complex PhnCDE involved in phosphonates import. Responsible for energy coupling to the transport system. The polypeptide is Phosphonates import ATP-binding protein PhnC (Nocardia farcinica (strain IFM 10152)).